A 398-amino-acid chain; its full sequence is 1-deoxy-D-xylulose 5-phosphate reductoisomerase (398 aa).

7 residues coordinate NADPH: threonine 10, glycine 11, serine 12, isoleucine 13, glycine 36, asparagine 38, and asparagine 124. A 1-deoxy-D-xylulose 5-phosphate-binding site is contributed by lysine 125. NADPH is bound at residue glutamate 126. Aspartate 150 is a binding site for Mn(2+). The 1-deoxy-D-xylulose 5-phosphate site is built by serine 151, glutamate 152, serine 186, and histidine 209. Mn(2+) is bound at residue glutamate 152. Residue glycine 215 coordinates NADPH. 1-deoxy-D-xylulose 5-phosphate-binding residues include serine 222, asparagine 227, lysine 228, and glutamate 231. Glutamate 231 provides a ligand contact to Mn(2+).

The protein belongs to the DXR family. Homodimer. Mg(2+) is required as a cofactor. Requires Mn(2+) as cofactor.

The enzyme catalyses 2-C-methyl-D-erythritol 4-phosphate + NADP(+) = 1-deoxy-D-xylulose 5-phosphate + NADPH + H(+). The protein operates within isoprenoid biosynthesis; isopentenyl diphosphate biosynthesis via DXP pathway; isopentenyl diphosphate from 1-deoxy-D-xylulose 5-phosphate: step 1/6. Its function is as follows. Catalyzes the NADPH-dependent rearrangement and reduction of 1-deoxy-D-xylulose-5-phosphate (DXP) to 2-C-methyl-D-erythritol 4-phosphate (MEP). The chain is 1-deoxy-D-xylulose 5-phosphate reductoisomerase from Pectobacterium atrosepticum (strain SCRI 1043 / ATCC BAA-672) (Erwinia carotovora subsp. atroseptica).